Consider the following 30-residue polypeptide: Cyclotide hyen-L (30 aa).

Residues 1–30 (GIPCAESCVYIPCTVTALLGCSCSDKVCYN) constitute a cross-link (cyclopeptide (Gly-Asn)). Cystine bridges form between cysteine 4/cysteine 21, cysteine 8/cysteine 23, and cysteine 13/cysteine 28.

In terms of processing, this is a cyclic peptide. Detected in stems (at protein level).

Its function is as follows. Probably participates in a plant defense mechanism. Has cytotoxic activity against HUVEC cells (LC(50)= 2.26 uM) and various cancer cells including HeLa (LC(50)= 3.48 uM), MCF-7 and K562. Displays very weak hemolytic activity. Binds to and induces leakage in phospholipd membranes, particularly ones containing 1-palmitoyl-2-oleophosphatidylethanolamine (POPE). The polypeptide is Cyclotide hyen-L (Pigea enneasperma (Spade flower)).